Reading from the N-terminus, the 260-residue chain is Thiazole synthase (260 aa).

Residue K102 is the Schiff-base intermediate with DXP of the active site. 1-deoxy-D-xylulose 5-phosphate-binding positions include G163, 189-190 (AG), and 211-212 (NT).

This sequence belongs to the ThiG family. In terms of assembly, homotetramer. Forms heterodimers with either ThiH or ThiS.

The protein resides in the cytoplasm. The enzyme catalyses [ThiS sulfur-carrier protein]-C-terminal-Gly-aminoethanethioate + 2-iminoacetate + 1-deoxy-D-xylulose 5-phosphate = [ThiS sulfur-carrier protein]-C-terminal Gly-Gly + 2-[(2R,5Z)-2-carboxy-4-methylthiazol-5(2H)-ylidene]ethyl phosphate + 2 H2O + H(+). It functions in the pathway cofactor biosynthesis; thiamine diphosphate biosynthesis. Its function is as follows. Catalyzes the rearrangement of 1-deoxy-D-xylulose 5-phosphate (DXP) to produce the thiazole phosphate moiety of thiamine. Sulfur is provided by the thiocarboxylate moiety of the carrier protein ThiS. In vitro, sulfur can be provided by H(2)S. This is Thiazole synthase from Geotalea uraniireducens (strain Rf4) (Geobacter uraniireducens).